A 118-amino-acid chain; its full sequence is MVRATNAVASHRRKKRLFKLAKGFVGDRKNHLRLTSGAVMRAMAYNYAHRKQKKRDFRSLWIMRLNAAARINGISYSKFIYGLKKAQCELDRKVLADMAIRDPGSFAAIVGFAKEALA.

The protein belongs to the bacterial ribosomal protein bL20 family.

Its function is as follows. Binds directly to 23S ribosomal RNA and is necessary for the in vitro assembly process of the 50S ribosomal subunit. It is not involved in the protein synthesizing functions of that subunit. This Protochlamydia amoebophila (strain UWE25) protein is Large ribosomal subunit protein bL20.